Here is a 742-residue protein sequence, read N- to C-terminus: Glucosylceramidase (742 aa).

N-linked (GlcNAc...) asparagine glycosylation is found at asparagine 37 and asparagine 160. Glutamate 258 functions as the Proton donor in the catalytic mechanism. N-linked (GlcNAc...) asparagine glycosylation is present at asparagine 388. The active-site Nucleophile is glutamate 492. N-linked (GlcNAc...) asparagine glycans are attached at residues asparagine 552, asparagine 560, and asparagine 698. Residues 701–721 (IAQILVAVVILLLGVLVAYYA) traverse the membrane as a helical segment.

It belongs to the glycosyl hydrolase 5 (cellulase A) family.

It localises to the membrane. The catalysed reaction is a beta-D-glucosyl-(1&lt;-&gt;1')-N-acylsphing-4-enine + H2O = an N-acylsphing-4-enine + D-glucose. Functionally, specifically hydrolyzes the glucosidic linkage in glucosylceramide. May prevent accumulation of aberrent glucosylceramide containing immature ceramide. This Cryptococcus neoformans var. grubii serotype A (strain H99 / ATCC 208821 / CBS 10515 / FGSC 9487) (Filobasidiella neoformans var. grubii) protein is Glucosylceramidase.